A 553-amino-acid polypeptide reads, in one-letter code: Phospholipase-B 81 (553 aa).

Residues Met-1–Arg-35 form the signal peptide. N-linked (GlcNAc...) asparagine glycosylation is found at Asn-69, Asn-313, Asn-416, and Asn-531.

The protein belongs to the phospholipase B-like family. Expressed by the venom gland.

It is found in the secreted. Its function is as follows. May cause hemolysis. The polypeptide is Phospholipase-B 81 (Drysdalia coronoides (White-lipped snake)).